A 54-amino-acid polypeptide reads, in one-letter code: Large ribosomal subunit protein bL32c (54 aa).

Belongs to the bacterial ribosomal protein bL32 family.

It is found in the plastid. It localises to the chloroplast. The chain is Large ribosomal subunit protein bL32c from Panax ginseng (Korean ginseng).